We begin with the raw amino-acid sequence, 202 residues long: Matrix protein (202 aa).

Positions 9 to 31 (KNRRDEDTQKSSPASAPLDDDDL) are disordered. Positions 35-38 (PPEY) match the PPXY motif motif. An essential for glycoprotein binding region spans residues 115-151 (KLRRTFIFQWADSRGPLEGEELEYSQEITWDDDTEFV).

Belongs to the lyssavirus matrix protein family. Homomultimer. Interacts with nucleoprotein and with the cytoplasmic domain of glycoprotein. Interacts with host ATP6V1A; this interaction plays an important role in virion uncoating after viral entry.

It localises to the virion membrane. The protein localises to the host endomembrane system. It is found in the host cytoplasm. Its function is as follows. Plays a major role in assembly, budding and uncoating of virion after membrane fusion. Completely covers the ribonucleoprotein coil and keep it in condensed bullet-shaped form. Inhibits viral transcription and stimulates replication. Plays a major role in early induction of TRAIL-mediated apoptosis in infected neurons. Inhibits the integrated stress response (ISR) in the infected cell by blocking the formation of stress granules. The chain is Matrix protein (M) from Rabies virus (strain SAD B19) (RABV).